We begin with the raw amino-acid sequence, 444 residues long: Bifunctional enolase 2/transcriptional activator (444 aa).

Residues His163 and Glu172 each coordinate substrate. The active-site Proton donor is Glu215. The Mg(2+) site is built by Asp250, Glu300, and Asp327. The substrate site is built by Glu300 and Asp327. Catalysis depends on Lys352, which acts as the Proton acceptor. Residues 379–382 (SHRS) and Lys403 each bind substrate.

Belongs to the enolase family. Homodimer. Requires Mg(2+) as cofactor.

It is found in the cytoplasm. The protein resides in the cytosol. It localises to the nucleus. Its subcellular location is the mitochondrion outer membrane. It carries out the reaction (2R)-2-phosphoglycerate = phosphoenolpyruvate + H2O. The protein operates within carbohydrate degradation; glycolysis; pyruvate from D-glyceraldehyde 3-phosphate: step 4/5. Its function is as follows. Multifunctional enzyme that acts as an enolase involved in the metabolism and as a positive regulator of cold-responsive gene transcription. Binds to the cis-element the gene promoter of STZ/ZAT10, a zinc finger transcriptional repressor. The chain is Bifunctional enolase 2/transcriptional activator (ENO2) from Arabidopsis thaliana (Mouse-ear cress).